A 166-amino-acid polypeptide reads, in one-letter code: MFPMVTEFMNYGQQTVRAARYIGQGFMITLSHANRLPVTIQYPYEKLIISERFRGRIHFEFDKCIACEVCVRVCPIDLPVVDWKLETDIRKKRLLNYSIDFGICIFCGNCVEYCPTNCLSMTEEYELSTYDRHELNYNQIALGRLPMSIIDDYTIRTILNLPEIKT.

4Fe-4S ferredoxin-type domains follow at residues 55 to 84 (GRIH…VDWK) and 95 to 124 (LNYS…MTEE). Positions 64, 67, 70, 74, 104, 107, 110, and 114 each coordinate [4Fe-4S] cluster.

It belongs to the complex I 23 kDa subunit family. As to quaternary structure, NDH is composed of at least 16 different subunits, 5 of which are encoded in the nucleus. It depends on [4Fe-4S] cluster as a cofactor.

It is found in the plastid. Its subcellular location is the chloroplast thylakoid membrane. The catalysed reaction is a plastoquinone + NADH + (n+1) H(+)(in) = a plastoquinol + NAD(+) + n H(+)(out). The enzyme catalyses a plastoquinone + NADPH + (n+1) H(+)(in) = a plastoquinol + NADP(+) + n H(+)(out). NDH shuttles electrons from NAD(P)H:plastoquinone, via FMN and iron-sulfur (Fe-S) centers, to quinones in the photosynthetic chain and possibly in a chloroplast respiratory chain. The immediate electron acceptor for the enzyme in this species is believed to be plastoquinone. Couples the redox reaction to proton translocation, and thus conserves the redox energy in a proton gradient. This Chamaechaenactis scaposa (Fullstem) protein is NAD(P)H-quinone oxidoreductase subunit I, chloroplastic.